The sequence spans 274 residues: MAVTIQDIAKLRKMSGAGMMDCKNALEESNNDFEKAMEIIRKKGQAVAAKRSDREAAEGCVLSADKDGFAAIVALKCETDFVAKNAEFIELTQNILNTAMDKKPANKEELLALPLADGRTIADHITDRIGVTGEKMELGAYEYISGASSISYIHPGNKLATVAAFNEAIEHQMARDIAMQIAAMNPVAVLPEQVDQHIIDQELQIAREKALEAGKPENLLDRIAQGALQKYYKENTLLQQEFVKDSKLTIEQYLHTGSKTLTVVGFKRFTLNAD.

Residues 79 to 82 (TDFV) are involved in Mg(2+) ion dislocation from EF-Tu.

The protein belongs to the EF-Ts family.

It is found in the cytoplasm. Functionally, associates with the EF-Tu.GDP complex and induces the exchange of GDP to GTP. It remains bound to the aminoacyl-tRNA.EF-Tu.GTP complex up to the GTP hydrolysis stage on the ribosome. This chain is Elongation factor Ts, found in Porphyromonas gingivalis (strain ATCC 33277 / DSM 20709 / CIP 103683 / JCM 12257 / NCTC 11834 / 2561).